The primary structure comprises 273 residues: Protein ALUMINUM SENSITIVE 3 (273 aa).

The next 7 helical transmembrane spans lie at 14–34 (WLIV…VVLL), 51–71 (IYSV…LQFI), 76–96 (NSGW…YTAG), 107–127 (YVAG…LVLL), 136–156 (YMIP…GVTM), 191–213 (ALVI…SLPG), and 228–248 (AIQL…VSSI).

The protein belongs to the UPF0014 family. In terms of tissue distribution, expressed in roots, leaves, stems, and flowers.

It is found in the cell membrane. Required for aluminum (Al) resistance/tolerance, probably by translocating Al from sensitive tissues such as growing roots to tissues less sensisitive to the toxic effects of Al. This is Protein ALUMINUM SENSITIVE 3 (ALS3) from Arabidopsis thaliana (Mouse-ear cress).